The sequence spans 143 residues: Ribonuclease H (143 aa).

The RNase H type-1 domain occupies 1–140; the sequence is MKVEIYTDGA…VDALANLGIE (140 aa). Positions 8, 46, 68, and 132 each coordinate Mg(2+).

The protein belongs to the RNase H family. As to quaternary structure, monomer. It depends on Mg(2+) as a cofactor.

It is found in the cytoplasm. It carries out the reaction Endonucleolytic cleavage to 5'-phosphomonoester.. In terms of biological role, endonuclease that specifically degrades the RNA of RNA-DNA hybrids. The polypeptide is Ribonuclease H (Legionella pneumophila (strain Paris)).